Reading from the N-terminus, the 271-residue chain is Ribosomal RNA small subunit methyltransferase A (271 aa).

H11, L13, G38, E58, D86, and N101 together coordinate S-adenosyl-L-methionine.

The protein belongs to the class I-like SAM-binding methyltransferase superfamily. rRNA adenine N(6)-methyltransferase family. RsmA subfamily.

Its subcellular location is the cytoplasm. The catalysed reaction is adenosine(1518)/adenosine(1519) in 16S rRNA + 4 S-adenosyl-L-methionine = N(6)-dimethyladenosine(1518)/N(6)-dimethyladenosine(1519) in 16S rRNA + 4 S-adenosyl-L-homocysteine + 4 H(+). In terms of biological role, specifically dimethylates two adjacent adenosines (A1518 and A1519) in the loop of a conserved hairpin near the 3'-end of 16S rRNA in the 30S particle. May play a critical role in biogenesis of 30S subunits. This Helicobacter pylori (strain Shi470) protein is Ribosomal RNA small subunit methyltransferase A.